The sequence spans 1288 residues: MSNLPQTQAHHLQPHPQHPQHLLHHHQQQQQQQQQQQQQQHGHHNHSDFPLPDGWDIAKDFDGKTYYIDHINKKTTWLDPRDRYTKPQSFEDCVGDELPVGWEEAYEPNIGRYYINHIAQSTQLEDPRQEWKSVQEQMLSDYLSAAQDQLENKREMYDVKQQRLLLAQEEYNHLNKLAASRSSLCSSSSSMSRHDPELLRADLMLARERVRQLKQELNHITNDISHTERGMNTLYSVGEKINARENGCYDIAEVQAIREEMLKVHKSLVSGEKVREELMRSLVQIKNELSRQQMNEENADLLNAASPFDRVCVASQTDLCGAGESLNGGARFAEMAKTKLQYAEWRKHIKKLQQQLADHVERIEPGQLESDKDRILLIQEKEKLLNDLNSISLKSRSLEETQVIQQTRQKLEDDLKEAYEANNTCIANRLRFHEEKQHLLDKLQEALKSTKLLEERLKSFSSESTFSISSGSSLGSLSTASSKSALSFTDIYVDHFAVDSPIDVVDLQRRSQRFFQQQQQQQQHRLPPVHGHPVLQQQQSSEVSLSPRSSLSMETPPASPMKYNAGADQPQLPPAAASLAPPKEEPTYANALPAPPAYTAPPPAPIAAVRAPHAYDLDSTVLDCMILEAKLKKLNLNSPLNLAAPLSPISEKPSLLDLPQEMLSRSSSTSNTRSVSAAVSNESVAGDSGVFEASRAHLPRRELAQVQIGLKYLKQEGVLVVSLERANNLLALWTASSDNSQVYLRAALLPNSLTSIRTKALGDFQKPVFNDTFAVPISLDKLLTKSLQVTVVSMTGQKEEIIGTVQISMAEFNPDDSTLKWYNVLSSKFMPSFESLDIPSTSAAAAAAAVAANNTNAMNSNSNNNREESSDESTITSSQTSTLTRNQAPPLELQAQIAEELPEHVRLNEQECSDDDDDDDDDDDEEEEDEQQLIGTEELTNSSGMLDTYLKIMKQQYADKETNTECAFPPEKSRAQSQLLDDRPVKRSQTFTPSAAVSKSRYNCRLNRSDSDSAMHFGVTPHTFHRGAAERRSLRFHTKAPKTATKLHHTHIPRTSLDLELDLQAQHSKLFFLNDQIAKLQNLKDVLQKGCESKDPLIAAWAIENEEFQRLVARADPAKCPEERQLQKLLMKTAKEIHKLRKTKVPKGCPDLVSFKEKITFFTRKGLSVPELPSEFILADGDAIEEEEEEDDNAAETAIAINTALVASSNRNKNLSEHHHRAACNSGAVPKRSATPTPITAATTADASASSAPATAAVAPTTAATVSDDKPDQQRFDYVVDRNYGVEV.

2 stretches are compositionally biased toward low complexity: residues 1 to 15 (MSNLPQTQAHHLQPH) and 28 to 40 (QQQQQQQQQQQQQ). The segment at 1–55 (MSNLPQTQAHHLQPHPQHPQHLLHHHQQQQQQQQQQQQQQHGHHNHSDFPLPDGW) is disordered. WW domains follow at residues 49 to 82 (FPLPDGWDIAKDFDGKTYYIDHINKKTTWLDPRD) and 96 to 129 (DELPVGWEEAYEPNIGRYYINHIAQSTQLEDPRQ). Coiled coils occupy residues 143-170 (LSAAQDQLENKREMYDVKQQRLLLAQEE), 197-232 (ELLRADLMLARERVRQLKQELNHITNDISHTERGMN), and 333-461 (AEMA…KSFS). The disordered stretch occupies residues 515–584 (FQQQQQQQQH…AAASLAPPKE (70 aa)). Composition is skewed to low complexity over residues 534-552 (VLQQQQSSEVSLSPRSSLS) and 565-581 (AGADQPQLPPAAASLAP). Residues 702–822 (ELAQVQIGLK…NPDDSTLKWY (121 aa)) form the C2 domain. Disordered stretches follow at residues 856–888 (NAMNSNSNNNREESSDESTITSSQTSTLTRNQA), 905–942 (VRLNEQECSDDDDDDDDDDDEEEEDEQQLIGTEELTNS), 964–994 (TECAFPPEKSRAQSQLLDDRPVKRSQTFTPS), and 1213–1277 (KNLS…QRFD). A compositionally biased stretch (low complexity) spans 872-884 (ESTITSSQTSTLT). Residues 911–931 (ECSDDDDDDDDDDDEEEEDEQ) show a composition bias toward acidic residues. Residues 1233-1265 (SATPTPITAATTADASASSAPATAAVAPTTAAT) are compositionally biased toward low complexity. Residues 1267 to 1277 (SDDKPDQQRFD) are compositionally biased toward basic and acidic residues.

This sequence belongs to the WWC family. KIBRA subfamily. As to quaternary structure, forms a complex with Mer and Ex. Interacts (via domain WW 1) with Ex (via RXPPXY motif). Interacts with Mer, Sav, Hpo and Wts.

It localises to the cytoplasm. The protein localises to the apical cell membrane. In terms of biological role, regulator of the Hippo/SWH (Sav/Wts/Hpo) signaling pathway, a signaling pathway that plays a pivotal role in organ size control and tumor suppression by restricting proliferation and promoting apoptosis. The core of this pathway is composed of a kinase cascade wherein Hippo (Hpo), in complex with its regulatory protein Salvador (Sav), phosphorylates and activates Warts (Wts) in complex with its regulatory protein Mats, which in turn phosphorylates and inactivates the Yorkie (Yki) oncoprotein. Kibra acts synergistically along with Ex and Mer to regulate the Hippo signaling pathway. The sequence is that of Protein kibra (Kibra) from Drosophila willistoni (Fruit fly).